The sequence spans 339 residues: uncharacterized protein (339 aa).

The segment at 1-24 (IQPARRHTKNTNMAKHTTKGTGHS) is disordered. Residues 10 to 21 (NTNMAKHTTKGT) are compositionally biased toward polar residues.

It is found in the mitochondrion. This is an uncharacterized protein from Zea mays (Maize).